Here is a 315-residue protein sequence, read N- to C-terminus: Ribosomal RNA small subunit methyltransferase H (315 aa).

Residues 37–39 (GGH), D57, F83, D105, and Q112 each bind S-adenosyl-L-methionine.

Belongs to the methyltransferase superfamily. RsmH family.

It localises to the cytoplasm. The catalysed reaction is cytidine(1402) in 16S rRNA + S-adenosyl-L-methionine = N(4)-methylcytidine(1402) in 16S rRNA + S-adenosyl-L-homocysteine + H(+). Its function is as follows. Specifically methylates the N4 position of cytidine in position 1402 (C1402) of 16S rRNA. This is Ribosomal RNA small subunit methyltransferase H from Pseudomonas entomophila (strain L48).